The primary structure comprises 270 residues: Malonyl-[acyl-carrier protein] O-methyltransferase (270 aa).

The protein belongs to the methyltransferase superfamily.

The catalysed reaction is malonyl-[ACP] + S-adenosyl-L-methionine = malonyl-[ACP] methyl ester + S-adenosyl-L-homocysteine. Its pathway is cofactor biosynthesis; biotin biosynthesis. Converts the free carboxyl group of a malonyl-thioester to its methyl ester by transfer of a methyl group from S-adenosyl-L-methionine (SAM). It allows to synthesize pimeloyl-ACP via the fatty acid synthetic pathway. This Magnetococcus marinus (strain ATCC BAA-1437 / JCM 17883 / MC-1) protein is Malonyl-[acyl-carrier protein] O-methyltransferase.